Here is a 501-residue protein sequence, read N- to C-terminus: MNRESFAAGERLVSPAYVRQGCEARRSHEHLIRLLLEKGKCPENGWDESTLELFLHELAIMDSNNFLGNCGVGEREGRVASALVARRHYRFIHGIGRSGDISAVQPKAAGSSLLNKIANSLVLDIIKLAGVHTVANCFVVPMATGMSLTLCFLTLRHKRPKAKYIIWPRIDQKSCFKSMITAGFEPVVIENVLEGDELRTDLKAVEAKVQELGPDYILCIHSTTSCFAPRVPDRLEELAVICANYGIPHIVNNAYGVQSSKCMHLIQQGARVGRIDAFVQSLDKNFMVPVGGAIIAGFNDSFIQEIGKMYPGRASASPSLDVLITLLSLGSNGYRKLLKERKEMFSYLSNQIKKLSEAYNERLLHTPHNPISLAMTLKTLDEHHDKAVTQLGSMLFTRQVSGARVVPLGSVQTVSGYTFRGFMSHTNNYPCAYLNAASAIGMKMQDVDLFIKRLDKCLKAVRKEQSKESDDNYDKTEDVDIEEMALKLDNVLLDTYQDASS.

The interval 1 to 44 (MNRESFAAGERLVSPAYVRQGCEARRSHEHLIRLLLEKGKCPEN) is tetramerization. The residue at position 14 (serine 14) is a Phosphoserine. Arginine 75 is a binding site for pyridoxal 5'-phosphate. Residues 96–106 (GRSGDISAVQP) are phosphate loop (P-loop). The substrate site is built by arginine 97, serine 98, and glutamine 105. Position 271 (arginine 271) interacts with tRNA. Residue lysine 284 is modified to N6-(pyridoxal phosphate)lysine. Substrate is bound at residue arginine 313. TRNA contacts are provided by arginine 398 and lysine 463.

Belongs to the SepSecS family. In terms of assembly, homotetramer formed by a catalytic dimer and a non-catalytic dimer serving as a binding platform that orients tRNASec for catalysis. Each tetramer binds the CCA ends of two tRNAs which point to the active sites of the catalytic dimer. The cofactor is pyridoxal 5'-phosphate.

The protein resides in the cytoplasm. It carries out the reaction O-phospho-L-seryl-tRNA(Sec) + selenophosphate + H2O = L-selenocysteinyl-tRNA(Sec) + 2 phosphate. Its pathway is aminoacyl-tRNA biosynthesis; selenocysteinyl-tRNA(Sec) biosynthesis; selenocysteinyl-tRNA(Sec) from L-seryl-tRNA(Sec) (archaeal/eukaryal route): step 2/2. In terms of biological role, converts O-phosphoseryl-tRNA(Sec) to selenocysteinyl-tRNA(Sec) required for selenoprotein biosynthesis. The polypeptide is O-phosphoseryl-tRNA(Sec) selenium transferase (SEPSECS) (Pongo abelii (Sumatran orangutan)).